The chain runs to 367 residues: Pyrimidine monooxygenase RutA (367 aa).

Residues 49–50, Asn115, Glu124, 140–141, and Ser190 contribute to the FMN site; these read IK and RY.

This sequence belongs to the NtaA/SnaA/DszA monooxygenase family. RutA subfamily.

It carries out the reaction uracil + FMNH2 + NADH + O2 = (Z)-3-ureidoacrylate + FMN + NAD(+) + H2O + H(+). The enzyme catalyses thymine + FMNH2 + NADH + O2 = (Z)-2-methylureidoacrylate + FMN + NAD(+) + H2O + H(+). Catalyzes the pyrimidine ring opening between N-3 and C-4 by an unusual flavin hydroperoxide-catalyzed mechanism, adding oxygen atoms in the process to yield ureidoacrylate peracid, that immediately reacts with FMN forming ureidoacrylate and FMN-N(5)-oxide. The FMN-N(5)-oxide reacts spontaneously with NADH to produce FMN. Requires the flavin reductase RutF to regenerate FMN in vivo. The polypeptide is Pyrimidine monooxygenase RutA (Yersinia enterocolitica serotype O:8 / biotype 1B (strain NCTC 13174 / 8081)).